We begin with the raw amino-acid sequence, 377 residues long: Chaperone protein DnaJ (377 aa).

Residues 5–70 (DFYEVLGVER…SKRAAYDQYG (66 aa)) enclose the J domain. The CR-type zinc-finger motif lies at 136–214 (GTTVTIRVPT…CHGQGRVEEQ (79 aa)). The Zn(2+) site is built by cysteine 149, cysteine 152, cysteine 166, cysteine 169, cysteine 188, cysteine 191, cysteine 202, and cysteine 205. CXXCXGXG motif repeat units lie at residues 149 to 156 (CKTCNGSG), 166 to 173 (CTTCGGIG), 188 to 195 (CPRCHGTG), and 202 to 209 (CGSCHGQG).

Belongs to the DnaJ family. Homodimer. Zn(2+) serves as cofactor.

It localises to the cytoplasm. In terms of biological role, participates actively in the response to hyperosmotic and heat shock by preventing the aggregation of stress-denatured proteins and by disaggregating proteins, also in an autonomous, DnaK-independent fashion. Unfolded proteins bind initially to DnaJ; upon interaction with the DnaJ-bound protein, DnaK hydrolyzes its bound ATP, resulting in the formation of a stable complex. GrpE releases ADP from DnaK; ATP binding to DnaK triggers the release of the substrate protein, thus completing the reaction cycle. Several rounds of ATP-dependent interactions between DnaJ, DnaK and GrpE are required for fully efficient folding. Also involved, together with DnaK and GrpE, in the DNA replication of plasmids through activation of initiation proteins. The protein is Chaperone protein DnaJ of Pseudomonas paraeruginosa (strain DSM 24068 / PA7) (Pseudomonas aeruginosa (strain PA7)).